Here is a 208-residue protein sequence, read N- to C-terminus: Kinetochore protein Spc25 (208 aa).

Residues 31-101 (SKIAAKHQLI…KKQRRDELMG (71 aa)) adopt a coiled-coil conformation.

Belongs to the SPC25 family. Component of the Ndc80 complex, which is composed of Ndc80, Nuf2 and Spc25.

The protein resides in the nucleus. Its subcellular location is the chromosome. It localises to the centromere. The protein localises to the kinetochore. Functionally, acts as a component of the essential kinetochore-associated Ndc80 complex, which is required for chromosome segregation and spindle checkpoint activity during meiosis and mitosis. Required for kinetochore integrity and the organization of stable microtubule binding sites in the outer plate of the kinetochore. Participates in SAC signaling that responds specifically to disruptions in spindle microtubule dynamics. The NDC80 complex synergistically enhances the affinity of the SKA1 complex for microtubules and may allow the NDC80 complex to track depolymerizing microtubules. This Drosophila mojavensis (Fruit fly) protein is Kinetochore protein Spc25.